The following is a 205-amino-acid chain: UPF0301 protein AZC_0488 (205 aa).

This sequence belongs to the UPF0301 (AlgH) family.

The sequence is that of UPF0301 protein AZC_0488 from Azorhizobium caulinodans (strain ATCC 43989 / DSM 5975 / JCM 20966 / LMG 6465 / NBRC 14845 / NCIMB 13405 / ORS 571).